Here is a 169-residue protein sequence, read N- to C-terminus: Ureidoglycolate lyase (169 aa).

The protein belongs to the ureidoglycolate lyase family. As to quaternary structure, homodimer. Requires Ni(2+) as cofactor.

It carries out the reaction (S)-ureidoglycolate = urea + glyoxylate. The protein operates within nitrogen metabolism; (S)-allantoin degradation. Catalyzes the catabolism of the allantoin degradation intermediate (S)-ureidoglycolate, generating urea and glyoxylate. Involved in the utilization of allantoin as nitrogen source. In Brucella ovis (strain ATCC 25840 / 63/290 / NCTC 10512), this protein is Ureidoglycolate lyase.